Here is a 79-residue protein sequence, read N- to C-terminus: Cytochrome c oxidase subunit 7A1, mitochondrial (79 aa).

Residues 1–21 (MQALRVSRALIRSFNTTARNR) constitute a mitochondrion transit peptide. At 22–46 (FQNRVPEKQKLFQEDNDIPLYLKGG) the chain is on the mitochondrial matrix side. The helical transmembrane segment at 47 to 75 (IVDNILYRVTMGLCLGGSAYSMYCLGWAS) threads the bilayer. The Mitochondrial intermembrane portion of the chain corresponds to 76–79 (FPRN).

It belongs to the cytochrome c oxidase VIIa family. Component of the complex IV (CIV, cytochrome c oxidase), a multisubunit enzyme composed of 14 subunits. The complex is composed of a catalytic core of 3 subunits MT-CO1, MT-CO2 and MT-CO3, encoded in the mitochondrial DNA, and 11 supernumerary subunits COX4I1 (or COX4I2), COX5A, COX5B, COX6A2 (or COX6A1), COX6B1 (or COX6B2), COX6C, COX7A1 (or COX7A2), COX7B, COX7C, COX8B and NDUFA4, which are encoded in the nuclear genome. The complex exists as a monomer or a dimer and forms supercomplexes (SCs) in the inner mitochondrial membrane with NADH-ubiquinone oxidoreductase (complex I, CI) and ubiquinol-cytochrome c oxidoreductase (cytochrome b-c1 complex, complex III, CIII), resulting in different assemblies (supercomplex SCI(1)III(2)IV(1) and megacomplex MCI(2)III(2)IV(2)).

The protein localises to the mitochondrion inner membrane. Its pathway is energy metabolism; oxidative phosphorylation. Its function is as follows. Component of the mitochondrial respiratory complex IV (CIV, also named cytochrome c oxidase complex), the last enzyme in the mitochondrial electron transport chain which drives oxidative phosphorylation. The CIV complex is the component of the respiratory chain that catalyzes the reduction of oxygen to water. Acts as an assembly factor that specifically drives the homodimerization of CIV complexes, mediating the formation of mitochondrial respiratory supercomplexes (respirasomes) containing two CIV: supercomplxes with two molecules of CIV show improved activity. Despite being highly expressed in brown adipose tissue, not required for thermogenesis. The polypeptide is Cytochrome c oxidase subunit 7A1, mitochondrial (COX7A1) (Trachypithecus cristatus (Silvered leaf-monkey)).